A 208-amino-acid chain; its full sequence is MKVLLKIIVGRAMNILKNFSVPNLCDAGAKPLNGIKPILENQKLVFGEAITVKISYNDWGTLIKTISFAKNKFIVAEVVGEGKYETAVWGGLASLNAKIKGVRGVVIDGCVRDVEDIKALKFPVFAKNFCPNAGKPLNLGEINVAVNCCGVIVEPGDIIVGDCNGVVVIKKESLPEIIENAKNIKEKERKIRERILRGQDLRDVLNLE.

This is an uncharacterized protein from Methanocaldococcus jannaschii (strain ATCC 43067 / DSM 2661 / JAL-1 / JCM 10045 / NBRC 100440) (Methanococcus jannaschii).